A 126-amino-acid polypeptide reads, in one-letter code: Large ribosomal subunit protein bL12 (126 aa).

Belongs to the bacterial ribosomal protein bL12 family. As to quaternary structure, homodimer. Part of the ribosomal stalk of the 50S ribosomal subunit. Forms a multimeric L10(L12)X complex, where L10 forms an elongated spine to which 2 to 4 L12 dimers bind in a sequential fashion. Binds GTP-bound translation factors.

In terms of biological role, forms part of the ribosomal stalk which helps the ribosome interact with GTP-bound translation factors. Is thus essential for accurate translation. This Methylobacterium nodulans (strain LMG 21967 / CNCM I-2342 / ORS 2060) protein is Large ribosomal subunit protein bL12.